A 98-amino-acid chain; its full sequence is NADH-ubiquinone oxidoreductase chain 4L (98 aa).

3 helical membrane-spanning segments follow: residues methionine 1–methionine 21, serine 29–leucine 49, and isoleucine 61–valine 81.

Belongs to the complex I subunit 4L family. Core subunit of respiratory chain NADH dehydrogenase (Complex I) which is composed of 45 different subunits.

It is found in the mitochondrion inner membrane. The enzyme catalyses a ubiquinone + NADH + 5 H(+)(in) = a ubiquinol + NAD(+) + 4 H(+)(out). Its function is as follows. Core subunit of the mitochondrial membrane respiratory chain NADH dehydrogenase (Complex I) which catalyzes electron transfer from NADH through the respiratory chain, using ubiquinone as an electron acceptor. Part of the enzyme membrane arm which is embedded in the lipid bilayer and involved in proton translocation. This chain is NADH-ubiquinone oxidoreductase chain 4L (MT-ND4L), found in Pteropus dasymallus (Ryukyu flying fox).